The primary structure comprises 377 residues: Cobalt-precorrin-5B C(1)-methyltransferase (377 aa).

The protein belongs to the CbiD family.

It catalyses the reaction Co-precorrin-5B + S-adenosyl-L-methionine = Co-precorrin-6A + S-adenosyl-L-homocysteine. The protein operates within cofactor biosynthesis; adenosylcobalamin biosynthesis; cob(II)yrinate a,c-diamide from sirohydrochlorin (anaerobic route): step 6/10. Functionally, catalyzes the methylation of C-1 in cobalt-precorrin-5B to form cobalt-precorrin-6A. The chain is Cobalt-precorrin-5B C(1)-methyltransferase from Alkaliphilus metalliredigens (strain QYMF).